The sequence spans 712 residues: Lactoperoxidase (712 aa).

An N-terminal signal peptide occupies residues 1-22 (MWVCLQLPVFLASVTLFEVAAS). Residues 23–100 (DTIAQAASTT…WEESFKRLRR (78 aa)) constitute a propeptide that is removed on maturation. Residue N106 is glycosylated (N-linked (GlcNAc...) (complex) asparagine; alternate). N106 carries N-linked (GlcNAc...) (hybrid) asparagine; alternate glycosylation. Intrachain disulfides connect C123–C284, C132–C145, C246–C256, and C250–C274. A glycan (N-linked (GlcNAc...) (complex) asparagine; alternate) is linked at N212. N212 carries an N-linked (GlcNAc...) (high mannose) asparagine; alternate glycan. D225 contributes to the heme b binding site. H226 serves as the catalytic Proton acceptor. Residue D227 coordinates Ca(2+). Ca(2+) is bound by residues T301, F303, D305, and S307. Phosphoserine is present on S315. N322 carries N-linked (GlcNAc...) (high mannose) asparagine glycosylation. A disulfide bridge links C354 with C365. N-linked (GlcNAc...) asparagine glycosylation is present at N358. Residue E375 participates in heme b binding. N449 carries N-linked (GlcNAc...) (complex) asparagine; alternate glycosylation. N449 carries an N-linked (GlcNAc...) (hybrid) asparagine; alternate glycan. Residue N449 is glycosylated (N-linked (GlcNAc...) (high mannose) asparagine; alternate). H468 is a binding site for heme b. Y482 is subject to 3'-nitrotyrosine. 2 cysteine pairs are disulfide-bonded: C573-C630 and C671-C696.

This sequence belongs to the peroxidase family. XPO subfamily. Ca(2+) serves as cofactor. Requires heme b as cofactor. In terms of tissue distribution, mammary gland; milk.

It localises to the secreted. The protein resides in the cytoplasm. The catalysed reaction is 2 a phenolic donor + H2O2 = 2 a phenolic radical donor + 2 H2O. It catalyses the reaction thiocyanate + H2O2 + H(+) = hypothiocyanous acid + H2O. It carries out the reaction iodide + H2O2 = hypoiodite + H2O. Heme-containing oxidoreductase which catalyzes the conversion of thiocyanate (SCN(-)) into antimicrobial agent hypothiocyanous acid (OSCN(-)) in the presence of hydrogen peroxide (H2O2). Also involved in the conversion of iodide (I(-)) into hypoiodite (IO(-)) in the presence of H2O2. Responsible for the inactivation of a wide range of micro-organisms and hence, important component of defense mechanism. Shows antibacterial properties against E.coli, K.pneumoniae, P.aeruginosa, S.sonnei, S.saphrophyticus, S.epidermidis and S.dysenteriae. May protect the udder from infection and may promote growth in newborns. May be implicated in airway host defense against infection. May contribute to maintaining an appropriate H2O2 cellular level, therefore protecting cells from H2O2-caused injuries and inflammation. In Bubalus bubalis (Domestic water buffalo), this protein is Lactoperoxidase.